Consider the following 220-residue polypeptide: U1 small nuclear ribonucleoprotein C (220 aa).

The Matrin-type zinc finger occupies 4 to 36; that stretch reads YYCDYCDIYLTHDSMNARKAHNSGRNHVANVRD. Composition is skewed to pro residues over residues 88-130 and 147-165; these read PGPP…PFLP and PPFP…PFRP. Residues 88-220 are disordered; that stretch reads PGPPPPGAFP…HPDRLRMLGQ (133 aa). The segment covering 166–200 has biased composition (low complexity); sequence PMGMGMPPAPAQAQAQGSPMGMPQQGQQGTFTPTQ. Basic and acidic residues predominate over residues 211–220; the sequence is HPDRLRMLGQ.

Belongs to the U1 small nuclear ribonucleoprotein C family. In terms of assembly, U1 snRNP is composed of the 7 core Sm proteins B/B', D1, D2, D3, E, F and G that assemble in a heptameric protein ring on the Sm site of the small nuclear RNA to form the core snRNP, and at least 3 U1 snRNP-specific proteins U1-70K, U1-A and U1-C. U1-C interacts with U1 snRNA and the 5' splice-site region of the pre-mRNA.

The protein resides in the nucleus. In terms of biological role, component of the spliceosomal U1 snRNP, which is essential for recognition of the pre-mRNA 5' splice-site and the subsequent assembly of the spliceosome. U1-C is directly involved in initial 5' splice-site recognition for both constitutive and regulated alternative splicing. The interaction with the 5' splice-site seems to precede base-pairing between the pre-mRNA and the U1 snRNA. Stimulates commitment or early (E) complex formation by stabilizing the base pairing of the 5' end of the U1 snRNA and the 5' splice-site region. The sequence is that of U1 small nuclear ribonucleoprotein C from Cryptococcus neoformans var. neoformans serotype D (strain JEC21 / ATCC MYA-565) (Filobasidiella neoformans).